Here is a 34-residue protein sequence, read N- to C-terminus: Photosystem II reaction center protein T (34 aa).

A helical membrane pass occupies residues 3–23 (ALVYTFLLVSTLGIIFFAIFF).

It belongs to the PsbT family. In terms of assembly, PSII is composed of 1 copy each of membrane proteins PsbA, PsbB, PsbC, PsbD, PsbE, PsbF, PsbH, PsbI, PsbJ, PsbK, PsbL, PsbM, PsbT, PsbY, PsbZ, Psb30/Ycf12, at least 3 peripheral proteins of the oxygen-evolving complex and a large number of cofactors. It forms dimeric complexes.

It is found in the plastid. Its subcellular location is the chloroplast thylakoid membrane. In terms of biological role, found at the monomer-monomer interface of the photosystem II (PS II) dimer, plays a role in assembly and dimerization of PSII. PSII is a light-driven water plastoquinone oxidoreductase, using light energy to abstract electrons from H(2)O, generating a proton gradient subsequently used for ATP formation. This is Photosystem II reaction center protein T from Solanum bulbocastanum (Wild potato).